We begin with the raw amino-acid sequence, 346 residues long: UDP-N-acetylenolpyruvoylglucosamine reductase (346 aa).

Residues 18 to 189 (LRAQARAFIA…VSVVFALKTH (172 aa)) enclose the FAD-binding PCMH-type domain. The active site involves R165. The Proton donor role is filled by S240. The active site involves E336.

The protein belongs to the MurB family. The cofactor is FAD.

It localises to the cytoplasm. It carries out the reaction UDP-N-acetyl-alpha-D-muramate + NADP(+) = UDP-N-acetyl-3-O-(1-carboxyvinyl)-alpha-D-glucosamine + NADPH + H(+). Its pathway is cell wall biogenesis; peptidoglycan biosynthesis. Functionally, cell wall formation. The protein is UDP-N-acetylenolpyruvoylglucosamine reductase of Neisseria meningitidis serogroup B (strain ATCC BAA-335 / MC58).